The following is a 409-amino-acid chain: Glycosaminoglycan xylosylkinase (409 aa).

Residues 1–6 are Cytoplasmic-facing; the sequence is MKLKQR. Residues 7-25 traverse the membrane as a helical; Signal-anchor for type II membrane protein segment; the sequence is VVVLCAVLFLLGLAKVFLL. The Lumenal segment spans residues 26–409; that stretch reads DGGEGSAASR…IEDRMNLPHP (384 aa). Positions 107 and 123 each coordinate ATP. Mn(2+) is bound at residue Asp-142. Asn-193 carries an N-linked (GlcNAc...) asparagine glycan. 2 cysteine pairs are disulfide-bonded: Cys-196-Cys-211 and Cys-201-Cys-204. 222–225 contributes to the ATP binding site; sequence TLWL. 2 disulfides stabilise this stretch: Cys-257–Cys-331 and Cys-332–Cys-389. Residue Asp-289 is part of the active site. Residues Glu-294 and Asp-309 each contribute to the ATP site. Asp-309 lines the Mn(2+) pocket.

It belongs to the FAM20 family. The cofactor is Mn(2+).

It localises to the golgi apparatus membrane. It catalyses the reaction 3-O-(beta-D-galactosyl-(1-&gt;3)-beta-D-galactosyl-(1-&gt;4)-beta-D-xylosyl)-L-seryl-[protein] + ATP = 3-O-(beta-D-galactosyl-(1-&gt;3)-beta-D-galactosyl-(1-&gt;4)-beta-D-2-O-phosphoxylosyl)-L-seryl-[protein] + ADP + H(+). Its function is as follows. Responsible for the 2-O-phosphorylation of xylose in the glycosaminoglycan-protein linkage region of proteoglycans thereby regulating the amount of mature GAG chains. Sulfated glycosaminoglycans (GAGs), including heparan sulfate and chondroitin sulfate, are synthesized on the so-called common GAG-protein linkage region (GlcUAbeta1-3Galbeta1-3Galbeta1-4Xylbeta1-O-Ser) of core proteins, which is formed by the stepwise addition of monosaccharide residues by the respective specific glycosyltransferases. The chain is Glycosaminoglycan xylosylkinase from Danio rerio (Zebrafish).